Reading from the N-terminus, the 449-residue chain is Putative gustatory receptor 77a (449 aa).

The Cytoplasmic portion of the chain corresponds to 1 to 27; sequence MPLPLGDPLALAVSPQLGYIRITAMPR. A helical membrane pass occupies residues 28-50; it reads WLQLPGMSALGILYSLTRVFGLM. The Extracellular segment spans residues 51–70; sequence ATANWSPRGIKRVRQSLYLR. Residues 71–93 form a helical membrane-spanning segment; that stretch reads IHGCVMLIFVGCFSPFAFWCIFQ. Topologically, residues 94-102 are cytoplasmic; sequence RMAFLRQNR. Residues 103–125 form a helical membrane-spanning segment; sequence ILLMIGFNRYVLLLVCAFMTLWI. The Extracellular segment spans residues 126-205; it reads HCFKQAEIIG…VRRNFMYACS (80 aa). Residues 206–228 traverse the membrane as a helical segment; it reads LVFVSVCQAILQLSLGMYTMAIL. The Cytoplasmic segment spans residues 229–298; it reads FLGHLVRHSN…LLKLHRSICS (70 aa). A helical membrane pass occupies residues 299-321; the sequence is LCAVQAVCFLGFVPLECTIHLFF. The Extracellular segment spans residues 322–340; that stretch reads TYFMKYSKFILRKYGRSFP. The chain crosses the membrane as a helical span at residues 341 to 363; sequence LNYFAIAFLVGLFTNLLLVILPT. The Cytoplasmic portion of the chain corresponds to 364–420; the sequence is YYSERRFNCTREIIKGGGLAFPSRITVKQLRHTMHFYGLYLKNVEHVFAVSACGLFK. A helical membrane pass occupies residues 421 to 443; it reads LNNAILFCIVGAILEYLMILIQF. The Extracellular portion of the chain corresponds to 444 to 449; sequence DKVLNK.

This sequence belongs to the insect chemoreceptor superfamily. Gustatory receptor (GR) family. Gr77a subfamily. As to expression, in larvae, is expressed in dorsal pharyngeal sense organ.

It is found in the cell membrane. Its function is as follows. Probable gustatory receptor which mediates acceptance or avoidance behavior, depending on its substrates. In Drosophila melanogaster (Fruit fly), this protein is Putative gustatory receptor 77a (Gr77a).